The sequence spans 128 residues: Large ribosomal subunit protein eL22 (128 aa).

Residue Thr-62 is modified to Phosphothreonine. Residue Ser-66 is modified to Phosphoserine. Lys-69 bears the N6-succinyllysine mark.

Belongs to the eukaryotic ribosomal protein eL22 family. Component of the large ribosomal subunit.

It is found in the cytoplasm. In terms of biological role, component of the large ribosomal subunit. The ribosome is a large ribonucleoprotein complex responsible for the synthesis of proteins in the cell. The sequence is that of Large ribosomal subunit protein eL22 (RPL22) from Oryctolagus cuniculus (Rabbit).